Here is a 358-residue protein sequence, read N- to C-terminus: Homer protein homolog 3 (358 aa).

A required for interaction with NFATC2 region spans residues 1-80; it reads MSTAREQPIF…TKTSQKFGQW (80 aa). In terms of domain architecture, WH1 spans 1–113; sequence MSTAREQPIF…EKFQEVKEAA (113 aa). Residues 95–122 are a coiled coil; it reads SEQQLTQFAEKFQEVKEAARLAREKSQD. Phosphoserine occurs at positions 120 and 158. Disordered stretches follow at residues 137 to 168 and 239 to 296; these read QVPP…TERE and AEPV…QVQD. The stretch at 190–355 forms a coiled coil; the sequence is ALQDSNQRLA…LREGLARLAE (166 aa). Residues 257-267 show a composition bias toward basic and acidic residues; that stretch reads LEARVQTKDQE. The segment covering 268–277 has biased composition (polar residues); it reads IQTLKNQSTG. Residues 280–290 show a composition bias toward basic and acidic residues; the sequence is EAPDTAEREET.

This sequence belongs to the Homer family. Tetramer. Encodes coiled-coil structures that mediate homo- and heteromultimerization. Interacts with NFATC2; interaction is calcium independent; interaction competes with PPP3CA for NFATC2 binding; interaction is reduced by AKT activation. Interacts with NFATC1 and NFATC4. Interacts with SHANK1; forms a high-order complex at least composed of SHANK1 and HOMER3; the complex formation is regulated by CAMK2A-mediated phosphorylation.

It localises to the cytoplasm. The protein localises to the postsynaptic density. It is found in the synapse. In terms of biological role, postsynaptic density scaffolding protein. Binds and cross-links cytoplasmic regions of GRM1, GRM5, ITPR1, DNM3, RYR1, RYR2, SHANK1 and SHANK3. By physically linking GRM1 and GRM5 with ER-associated ITPR1 receptors, it aids the coupling of surface receptors to intracellular calcium release. Negatively regulates T cell activation by inhibiting the calcineurin-NFAT pathway. Acts by competing with calcineurin/PPP3CA for NFAT protein binding, hence preventing NFAT activation by PPP3CA. The protein is Homer protein homolog 3 of Rattus norvegicus (Rat).